A 516-amino-acid polypeptide reads, in one-letter code: Delta(24)-sterol reductase (516 aa).

An N-terminal signal peptide occupies residues 1–22 (MEPAVSLAVCALLFLLWVRVKG). Over 23–31 (LEFVLIHQR) the chain is Lumenal. A helical membrane pass occupies residues 32-52 (WVFVCLFLLPLSLIFDIYYYV). Over 53 to 516 (RAWVVFKLSS…YDKICKAARH (464 aa)) the chain is Cytoplasmic. An FAD-binding PCMH-type domain is found at 58–234 (FKLSSAPRLH…VAAEIRIIPA (177 aa)). 163 to 175 (TVGGLIMGTGIES) provides a ligand contact to FAD.

Belongs to the FAD-binding oxidoreductase/transferase type 4 family. FAD is required as a cofactor.

It localises to the endoplasmic reticulum membrane. It is found in the golgi apparatus membrane. It catalyses the reaction 5alpha-cholest-8-en-3beta-ol + NADP(+) = zymosterol + NADPH + H(+). The enzyme catalyses cholesterol + NADP(+) = desmosterol + NADPH + H(+). The catalysed reaction is lanosterol + NADPH + H(+) = 24,25-dihydrolanosterol + NADP(+). It participates in steroid biosynthesis; cholesterol biosynthesis. Catalyzes the reduction of the delta-24 double bond of sterol intermediates during cholesterol biosynthesis. In addition to its cholesterol-synthesizing activity, can protect cells from oxidative stress by reducing caspase 3 activity during apoptosis induced by oxidative stress. Also protects against amyloid-beta peptide-induced apoptosis. This chain is Delta(24)-sterol reductase (Dhcr24), found in Mus musculus (Mouse).